The following is a 945-amino-acid chain: Isoleucine--tRNA ligase 1 (945 aa).

The short motif at 66–76 (PYANGDIHLGH) is the 'HIGH' region element. An L-isoleucyl-5'-AMP-binding site is contributed by glutamate 581. The 'KMSKS' region signature appears at 622 to 626 (KMSKS). An ATP-binding site is contributed by lysine 625. 4 residues coordinate Zn(2+): cysteine 908, cysteine 911, cysteine 928, and cysteine 931.

Belongs to the class-I aminoacyl-tRNA synthetase family. IleS type 1 subfamily. Monomer. The cofactor is Zn(2+).

The protein localises to the cytoplasm. It carries out the reaction tRNA(Ile) + L-isoleucine + ATP = L-isoleucyl-tRNA(Ile) + AMP + diphosphate. Its function is as follows. Catalyzes the attachment of isoleucine to tRNA(Ile). As IleRS can inadvertently accommodate and process structurally similar amino acids such as valine, to avoid such errors it has two additional distinct tRNA(Ile)-dependent editing activities. One activity is designated as 'pretransfer' editing and involves the hydrolysis of activated Val-AMP. The other activity is designated 'posttransfer' editing and involves deacylation of mischarged Val-tRNA(Ile). This chain is Isoleucine--tRNA ligase 1, found in Burkholderia mallei (strain ATCC 23344).